Reading from the N-terminus, the 131-residue chain is Cyclin-dependent kinase 4 inhibitor B (131 aa).

4 ANK repeats span residues 6-35 (GGDADLANAAARGQVEAVRQLLEAGVDPNR), 39-67 (FGRRPIQVMMMGSARVAELLLLHGADPNC), 72-101 (TLTRPVHDAAREGFLDTLVALHRAGGRLDV), and 105-131 (WGRLPVDLAEERGHRDVARYLRATAGD).

It belongs to the CDKN2 cyclin-dependent kinase inhibitor family. As to quaternary structure, heterodimer of CDKN2B with CDK4 or CDK6.

Interacts strongly with CDK4 and CDK6. Potent inhibitor. Potential effector of TGF-beta induced cell cycle arrest. In Bos taurus (Bovine), this protein is Cyclin-dependent kinase 4 inhibitor B (CDKN2B).